The sequence spans 255 residues: MNDYIVVKCGGSMLEQLNDVFFDCIKKLQQQYKVVIVHGGGPEIDAKLKDCNINVEKRDGLRVTPKEVMDVVQMVLCGSTNKKFVMNLQKHNLLAVGCSGCDGKLLQVQPVSEEIGYVGEVSYVETALLKGLINMNYIPVIAPIGIHDNEIYNINADTAAAGIAAALSAKELILITDVDGILHEGKLVKKTDESEIATLIEKGVITGGMIPKVQAALASLKMGVQKISIVNGTKDFTEDTGECIGTTVTRGVSIV.

Substrate contacts are provided by residues 40 to 41 (GG), Arg-62, and Asn-153.

The protein belongs to the acetylglutamate kinase family. ArgB subfamily.

The protein resides in the cytoplasm. It carries out the reaction N-acetyl-L-glutamate + ATP = N-acetyl-L-glutamyl 5-phosphate + ADP. The protein operates within amino-acid biosynthesis; L-arginine biosynthesis; N(2)-acetyl-L-ornithine from L-glutamate: step 2/4. Its function is as follows. Catalyzes the ATP-dependent phosphorylation of N-acetyl-L-glutamate. The polypeptide is Acetylglutamate kinase (Bacillus cereus (strain AH820)).